The chain runs to 93 residues: Small ribosomal subunit protein uS19 (93 aa).

It belongs to the universal ribosomal protein uS19 family.

In terms of biological role, protein S19 forms a complex with S13 that binds strongly to the 16S ribosomal RNA. This is Small ribosomal subunit protein uS19 from Nitratidesulfovibrio vulgaris (strain DSM 19637 / Miyazaki F) (Desulfovibrio vulgaris).